Consider the following 183-residue polypeptide: uncharacterized protein (183 aa).

Residues 27-170 (MIKLIDSARS…VAEIMMQKHL (144 aa)) form the SIS domain.

Belongs to the SIS family. PHI subfamily.

This is an uncharacterized protein from Archaeoglobus fulgidus (strain ATCC 49558 / DSM 4304 / JCM 9628 / NBRC 100126 / VC-16).